The sequence spans 455 residues: Bifunctional protein GlmU (455 aa).

Residues 1–229 (MSKKVMSVVI…LNEIEGINDG (229 aa)) are pyrophosphorylase. Residues 11 to 14 (LAAG), Lys-25, Gln-76, 81 to 82 (GT), 103 to 105 (YGD), Gly-140, Glu-154, Asn-169, and Asn-227 each bind UDP-N-acetyl-alpha-D-glucosamine. Asp-105 lines the Mg(2+) pocket. Asn-227 is a Mg(2+) binding site. The tract at residues 230 to 250 (LQLARLERLFQKQQAEKLLLS) is linker. The segment at 251-455 (GVRILDPARF…IQGWKRPKKT (205 aa)) is N-acetyltransferase. 2 residues coordinate UDP-N-acetyl-alpha-D-glucosamine: Arg-333 and Lys-351. Residue His-363 is the Proton acceptor of the active site. Residues Tyr-366 and Asn-377 each coordinate UDP-N-acetyl-alpha-D-glucosamine. Acetyl-CoA-binding positions include Ala-380, 386-387 (NY), Ser-405, Ala-423, and Arg-440.

This sequence in the N-terminal section; belongs to the N-acetylglucosamine-1-phosphate uridyltransferase family. The protein in the C-terminal section; belongs to the transferase hexapeptide repeat family. Homotrimer. Mg(2+) serves as cofactor.

Its subcellular location is the cytoplasm. The catalysed reaction is alpha-D-glucosamine 1-phosphate + acetyl-CoA = N-acetyl-alpha-D-glucosamine 1-phosphate + CoA + H(+). It catalyses the reaction N-acetyl-alpha-D-glucosamine 1-phosphate + UTP + H(+) = UDP-N-acetyl-alpha-D-glucosamine + diphosphate. It functions in the pathway nucleotide-sugar biosynthesis; UDP-N-acetyl-alpha-D-glucosamine biosynthesis; N-acetyl-alpha-D-glucosamine 1-phosphate from alpha-D-glucosamine 6-phosphate (route II): step 2/2. Its pathway is nucleotide-sugar biosynthesis; UDP-N-acetyl-alpha-D-glucosamine biosynthesis; UDP-N-acetyl-alpha-D-glucosamine from N-acetyl-alpha-D-glucosamine 1-phosphate: step 1/1. It participates in bacterial outer membrane biogenesis; LPS lipid A biosynthesis. Its function is as follows. Catalyzes the last two sequential reactions in the de novo biosynthetic pathway for UDP-N-acetylglucosamine (UDP-GlcNAc). The C-terminal domain catalyzes the transfer of acetyl group from acetyl coenzyme A to glucosamine-1-phosphate (GlcN-1-P) to produce N-acetylglucosamine-1-phosphate (GlcNAc-1-P), which is converted into UDP-GlcNAc by the transfer of uridine 5-monophosphate (from uridine 5-triphosphate), a reaction catalyzed by the N-terminal domain. In Hamiltonella defensa subsp. Acyrthosiphon pisum (strain 5AT), this protein is Bifunctional protein GlmU.